The sequence spans 188 residues: Probable manganese efflux pump MntP (188 aa).

A run of 5 helical transmembrane segments spans residues 3–23 (ITAT…ASIG), 66–86 (LEWN…RMII), 106–128 (WLLV…GLAF), 143–163 (ATLI…SIIG), and 168–188 (ILGG…HFHG).

It belongs to the MntP (TC 9.B.29) family.

It is found in the cell inner membrane. In terms of biological role, probably functions as a manganese efflux pump. The chain is Probable manganese efflux pump MntP from Escherichia coli O139:H28 (strain E24377A / ETEC).